Consider the following 381-residue polypeptide: Cyclic AMP-AMP-GMP synthase (381 aa).

Residues Gln-51, Ser-53, Arg-56, Asp-69, Asp-71, and Arg-109 each contribute to the ATP site. Active-site residues include Asp-69 and Asp-71. Mg(2+)-binding residues include Asp-69 and Asp-71. Asp-121 is an active-site residue. Positions 121 and 196 each coordinate Mg(2+). Residues Asp-196, Arg-197, Arg-204, Thr-205, Gln-210, Lys-233, and Tyr-250 each coordinate ATP. Asn-258 and Leu-260 together coordinate Mg(2+). ATP is bound by residues Val-304 and Arg-307. The tract at residues 348–381 (GSKFPLPGPQGGDRNGGFTTPSKPAEPQKTGRFA) is disordered.

This sequence belongs to the CD-NTase family. D02 subfamily. Monomer. Crystallizes as a Cap2 homodimer bound on each side by a CdnD monomer. Requires Mg(2+) as cofactor. In terms of processing, in bacteria expressing cap4-dncV-cap2-cap3, this protein is conjugated to a number of other proteins by Cap2, probably via this protein's C-terminal Ala residue. More conjugated DncV is found in the absence of Cap3.

The catalysed reaction is GTP + 2 ATP = 3',3',3'-cAAG + 3 diphosphate. Primed for activation by Cap2 which conjugates it to cellular proteins; activation is target protein-specific (green fluorescent protein does not activate the enzyme), but which protein(s) activate it is unclear. In terms of biological role, cyclic nucleotide synthase (second messenger synthase) of a CBASS antivirus system. CBASS (cyclic oligonucleotide-based antiphage signaling system) provides immunity against bacteriophages. The CD-NTase protein (CdnD, this protein) synthesizes cyclic nucleotides in response to infection; these serve as specific second messenger signals. The signals activate a diverse range of effectors, leading to bacterial cell death and thus abortive phage infection. A type II-C(AAG) CBASS system. Its function is as follows. Cyclic trinucleotide synthase that catalyzes the synthesis of 3',3',3'-cyclic AMP-AMP-GMP (cAAG) as the major product, a second messenger for cell signal transduction. Uses ATP as the first donor nucleotide, followed by GTP. Protects E.coli against phage T2 infection. When the cdnD-cap2-cap3-cap4 operon is introduced in E.coli there is a more than 10(3) decrease in the efficiency of T2 plaque formation. The operon does not protect against phage T5 and only about 10-fold against T7. Expression of cdnD-cap4 alone protects E.coli against phage T2 infection. The protein is Cyclic AMP-AMP-GMP synthase of Enterobacter hormaechei subsp. hoffmannii (strain UCI 50).